Here is a 494-residue protein sequence, read N- to C-terminus: UDP-N-acetylmuramate--L-alanine ligase (494 aa).

140 to 146 (GTHGKTT) contacts ATP.

This sequence belongs to the MurCDEF family.

The protein localises to the cytoplasm. It carries out the reaction UDP-N-acetyl-alpha-D-muramate + L-alanine + ATP = UDP-N-acetyl-alpha-D-muramoyl-L-alanine + ADP + phosphate + H(+). Its pathway is cell wall biogenesis; peptidoglycan biosynthesis. Functionally, cell wall formation. This Nostoc sp. (strain PCC 7120 / SAG 25.82 / UTEX 2576) protein is UDP-N-acetylmuramate--L-alanine ligase.